A 165-amino-acid polypeptide reads, in one-letter code: Large ribosomal subunit protein uL10 (165 aa).

The protein belongs to the universal ribosomal protein uL10 family. Part of the ribosomal stalk of the 50S ribosomal subunit. The N-terminus interacts with L11 and the large rRNA to form the base of the stalk. The C-terminus forms an elongated spine to which L12 dimers bind in a sequential fashion forming a multimeric L10(L12)X complex.

Forms part of the ribosomal stalk, playing a central role in the interaction of the ribosome with GTP-bound translation factors. The chain is Large ribosomal subunit protein uL10 from Burkholderia thailandensis (strain ATCC 700388 / DSM 13276 / CCUG 48851 / CIP 106301 / E264).